The following is a 142-amino-acid chain: Arginine vasopressin-induced protein 1 (142 aa).

2 disordered regions span residues 1-28 (MGTPASVVSEPPLWQVSTPQTRGRKQAS) and 74-142 (RLRR…QIRH). Residues 15 to 28 (QVSTPQTRGRKQAS) show a composition bias toward polar residues. A compositionally biased stretch (basic residues) spans 74-88 (RLRRKRPPKQNHCSR). Polar residues predominate over residues 96-119 (STASDPQASTTDTASSEQSGNSRR).

Functionally, may be involved in MAP kinase activation, epithelial sodium channel (ENaC) down-regulation and cell cycling. The sequence is that of Arginine vasopressin-induced protein 1 (Avpi1) from Mus musculus (Mouse).